The primary structure comprises 397 residues: SET domain-containing protein 4 (397 aa).

The 217-residue stretch at 29 to 245 (AKLEPCRFKE…KCSEVFINYG (217 aa)) folds into the SET domain. Tyr244 serves as a coordination point for S-adenosyl-L-methionine.

This sequence belongs to the class V-like SAM-binding methyltransferase superfamily. SETD4 family.

The protein localises to the nucleus. It catalyses the reaction L-lysyl(79)-[histone H3] + 3 S-adenosyl-L-methionine = N(6),N(6),N(6)-trimethyl-L-lysyl(79)-[histone H3] + 3 S-adenosyl-L-homocysteine + 3 H(+). The catalysed reaction is L-lysyl(20)-[histone H4] + S-adenosyl-L-methionine = N(6)-methyl-L-lysyl(20)-[histone H4] + S-adenosyl-L-homocysteine + H(+). The enzyme catalyses N(6)-methyl-L-lysyl(20)-[histone H4] + S-adenosyl-L-methionine = N(6),N(6)-dimethyl-L-lysyl(20)-[histone H4] + S-adenosyl-L-homocysteine + H(+). It carries out the reaction N(6),N(6)-dimethyl-L-lysyl(20)-[histone H4] + S-adenosyl-L-methionine = N(6),N(6),N(6)-trimethyl-L-lysyl(20)-[histone H4] + S-adenosyl-L-homocysteine + H(+). Protein-lysine N-methyltransferase involved in the regulation of cell quiescence by catalyzing the trimethylation of 'Lys-20' of histone H4 and 'Lys-79' of histone H3 (H4K20me3 and H3K79me3, respectively) during diapause formation, a state of obligate dormancy. This chain is SET domain-containing protein 4, found in Artemia parthenogenetica (Brine shrimp).